Here is a 244-residue protein sequence, read N- to C-terminus: MSMLCYTLIIAFLIGIWAAPKSEDNVSLGSPATPDLSDTSCAKTHEALKTSRNTDQHYPAPKKAEDQEFGSAANIIVDPKLFQKRRFQSPRVLFSTQPPPLSRDEQSVEFLDNADSLNRNIRAKRATHPVHNRGEFSVCDSVSVWVANKTTATDIRGNVVTVMVDVKLNNNVYRQYFFETKCKNPSPVSSGCRGIDAKHWNSYCTTTDTFVRALTMEGNQASWRFIRIDTACVCVISRKNDNFG.

The N-terminal stretch at 1 to 18 is a signal peptide; sequence MSMLCYTLIIAFLIGIWA. Positions 19–125 are excised as a propeptide; sequence APKSEDNVSL…SLNRNIRAKR (107 aa). 3 disulfide bridges follow: Cys-139-Cys-204, Cys-182-Cys-232, and Cys-192-Cys-234. Residue Asn-148 is glycosylated (N-linked (GlcNAc...) asparagine).

Belongs to the NGF-beta family. In terms of assembly, homodimer; non-covalently linked. Post-translationally, N-glycosylated. Expressed by the venom gland.

It localises to the secreted. Its function is as follows. Nerve growth factor is important for the development and maintenance of the sympathetic and sensory nervous systems. It stimulates division and differentiation of sympathetic and embryonic sensory neurons as well as basal forebrain cholinergic neurons in the brain. Its relevance in the snake venom is not clear. However, it has been shown to inhibit metalloproteinase-dependent proteolysis of platelet glycoprotein Ib alpha, suggesting a metalloproteinase inhibition to prevent metalloprotease autodigestion and/or protection against prey proteases. Binds a lipid between the two protein chains in the homodimer. The lipid-bound form promotes histamine relase from mouse mast cells, contrary to the lipid-free form. It promotes neurite outgrowth in rat PC12 pheochromocytoma cells. The polypeptide is Venom nerve growth factor (Macrovipera lebetinus (Levantine viper)).